Reading from the N-terminus, the 75-residue chain is UPF0270 protein PST_1436 (75 aa).

This sequence belongs to the UPF0270 family.

This Stutzerimonas stutzeri (strain A1501) (Pseudomonas stutzeri) protein is UPF0270 protein PST_1436.